A 595-amino-acid polypeptide reads, in one-letter code: MAATAATTFSLSSSSSTSAAASKALKQSPKPSALNLGFLGSSSTIKACRSLKAARVLPSGANGGGSALSAQMVSAPSINTPSATTFDFDSSVFKKEKVTLSGHDEYIVRGGRNLFPLLPDAFKGIKQIGVIGWGSQAPAQAQNLKDSLTEAKSDVVVKIGLRKGSNSFAEARAAGFSEENGTLGDMWETISGSDLVLLLISDSAQADNYEKVFSHMKPNSILGLSHGFLLGHLQSLGQDFPKNISVIAVCPKGMGPSVRRLYVQGKEVNGAGINSSFAVHQDVDGRATDVALGWSIALGSPFTFATTLEQEYKSDIFGERGILLGAVHGIVECLFRRYTESGMSEDLAYKNTVECITGVISKTISTKGMLALYNSLSEEGKKDFQAAYSASYYPSMDILYECYEDVASGSEIRSVVLAGRRFYEKEGLPAFPMGKIDQTRMWKVGEKVRSVRPAGDLGPLYPFTAGVYVALMMAQIEILRKKGHSYSEIINESVIEAVDSLNPFMHARGVSFMVDNCSTTARLGSRKWAPRFDYILSQQALVAVDNGAPINQDLISNFLSDPVHEAIGVCAQLRPSVDISVTADADFVRPELRQA.

The transit peptide at 1-72 (MAATAATTFS…GGGSALSAQM (72 aa)) directs the protein to the chloroplast. One can recognise a KARI N-terminal Rossmann domain in the interval 108–306 (VRGGRNLFPL…ALGSPFTFAT (199 aa)). NADP(+) is bound by residues 129–136 (GVIGWGSQ), 162–167 (RKGSNS), and 201–205 (SDSAQ). Histidine 226 is an active-site residue. 2 consecutive KARI C-terminal knotted domains span residues 307 to 455 (TLEQ…RPAG) and 456 to 592 (DLGP…RPEL). Residues aspartate 315, glutamate 319, glutamate 492, and glutamate 496 each contribute to the Mg(2+) site. Position 518 (serine 518) interacts with substrate.

The protein belongs to the ketol-acid reductoisomerase family. In terms of assembly, homodimer. It depends on Mg(2+) as a cofactor.

The protein localises to the plastid. The protein resides in the chloroplast. It catalyses the reaction (2R)-2,3-dihydroxy-3-methylbutanoate + NADP(+) = (2S)-2-acetolactate + NADPH + H(+). The catalysed reaction is (2R,3R)-2,3-dihydroxy-3-methylpentanoate + NADP(+) = (S)-2-ethyl-2-hydroxy-3-oxobutanoate + NADPH + H(+). Its pathway is amino-acid biosynthesis; L-isoleucine biosynthesis; L-isoleucine from 2-oxobutanoate: step 2/4. The protein operates within amino-acid biosynthesis; L-valine biosynthesis; L-valine from pyruvate: step 2/4. The chain is Ketol-acid reductoisomerase, chloroplastic (AHRI) from Spinacia oleracea (Spinach).